A 378-amino-acid chain; its full sequence is Enoyl-[acyl-carrier-protein] reductase 1, mitochondrial (378 aa).

The active-site Proton donor is Tyr59. NADP(+)-binding positions include Asn151, 180 to 183 (NSQV), 203 to 206 (RDGK), 284 to 287 (YGGM), 309 to 311 (YWL), and Lys372.

It belongs to the zinc-containing alcohol dehydrogenase family. Quinone oxidoreductase subfamily. In terms of assembly, homodimer.

It is found in the mitochondrion matrix. The enzyme catalyses a 2,3-saturated acyl-[ACP] + NADP(+) = a (2E)-enoyl-[ACP] + NADPH + H(+). In terms of biological role, catalyzes the NADPH-dependent reduction of trans-2-enoyl thioesters in mitochondrial fatty acid synthesis (fatty acid synthesis type II). Fatty acid chain elongation in mitochondria uses acyl carrier protein (ACP) as an acyl group carrier, but the enzyme accepts both ACP and CoA thioesters as substrates in vitro. Required for respiration and the maintenance of the mitochondrial compartment. The protein is Enoyl-[acyl-carrier-protein] reductase 1, mitochondrial (ETR1) of Debaryomyces hansenii (strain ATCC 36239 / CBS 767 / BCRC 21394 / JCM 1990 / NBRC 0083 / IGC 2968) (Yeast).